An 845-amino-acid polypeptide reads, in one-letter code: Aryl hydrocarbon receptor (845 aa).

The propeptide occupies 1-10; that stretch reads MNSSSASITY. Residues 1-10 are compositionally biased toward polar residues; it reads MNSSSASITY. The disordered stretch occupies residues 1–39; sequence MNSSSASITYASRKRRKPVQKTVKPVPAEGIKSNPSKRH. 2 short sequence motifs (nuclear localization signal) span residues 13 to 16 and 37 to 42; these read RKRR and KRHRDR. Residues 27–80 enclose the bHLH domain; it reads PAEGIKSNPSKRHRDRLNTELDRLASLLPFPQDVVNKLDKLSVLRLSVSYLRAK. 3 required for maintaining the overall integrity of the AHR:ARNT heterodimer and its transcriptional activity regions span residues 50–82, 117–125, and 265–267; these read LASL…AKSF, LLQALNGFV, and FAI. The Nuclear export signal signature appears at 64–72; that stretch reads LDKLSVLRL. Residues 110 to 180 form the PAS 1 domain; the sequence is NLQEGEFLLQ…RQLHWALNPS (71 aa). The region spanning 274-341 is the PAS 2 domain; it reads PSILEIRTKN…CAEYHIRMIK (68 aa). The region spanning 347–385 is the PAC domain; it reads LIVFRLLTKDNRWTWVQSNARLVYKNGRPDYIIATQRPL. Positions 820–845 are disordered; the sequence is NNTQPTTHLHPSEARPFSDLTSSGFL.

As to quaternary structure, homodimer. Heterodimer; efficient DNA binding requires dimerization with another bHLH protein. Interacts with ARNT; the heterodimer ARNT:AHR binds to core DNA sequence 5'-TGCGTG-3' within the dioxin response element (DRE) of target gene promoters and activates their transcription. Binds MYBBP1A. Interacts with coactivators including SRC-1, RIP140 and NOCA7, and with the corepressor SMRT. Interacts with NEDD8 and IVNS1ABP. Interacts with BMAL1. Interacts with HSP90AB1. Interacts with TIPARP; leading to mono-ADP-ribosylation of AHR and subsequent inhibition of AHR. Post-translationally, mono-ADP-ribosylated, leading to inhibit transcription activator activity of AHR.

The protein resides in the cytoplasm. It is found in the nucleus. In terms of biological role, ligand-activated transcription factor that enables cells to adapt to changing conditions by sensing compounds from the environment, diet, microbiome and cellular metabolism, and which plays important roles in development, immunity and cancer. Upon ligand binding, translocates into the nucleus, where it heterodimerizes with ARNT and induces transcription by binding to xenobiotic response elements (XRE). Regulates a variety of biological processes, including angiogenesis, hematopoiesis, drug and lipid metabolism, cell motility and immune modulation. Xenobiotics can act as ligands: upon xenobiotic-binding, activates the expression of multiple phase I and II xenobiotic chemical metabolizing enzyme genes (such as the CYP1A1 gene). Mediates biochemical and toxic effects of halogenated aromatic hydrocarbons. Next to xenobiotics, natural ligands derived from plants, microbiota, and endogenous metabolism are potent AHR agonists. Tryptophan (Trp) derivatives constitute an important class of endogenous AHR ligands. Acts as a negative regulator of anti-tumor immunity: indoles and kynurenic acid generated by Trp catabolism act as ligand and activate AHR, thereby promoting AHR-driven cancer cell motility and suppressing adaptive immunity. Regulates the circadian clock by inhibiting the basal and circadian expression of the core circadian component PER1. Inhibits PER1 by repressing the CLOCK-BMAL1 heterodimer mediated transcriptional activation of PER1. The heterodimer ARNT:AHR binds to core DNA sequence 5'-TGCGTG-3' within the dioxin response element (DRE) of target gene promoters and activates their transcription. The sequence is that of Aryl hydrocarbon receptor (AHR) from Delphinapterus leucas (Beluga whale).